The following is a 161-amino-acid chain: SsrA-binding protein (161 aa).

The disordered stretch occupies residues 137 to 161 (HDKRTDSKEKDWNRDKARIMKSSLR). Over residues 139–154 (KRTDSKEKDWNRDKAR) the composition is skewed to basic and acidic residues.

The protein belongs to the SmpB family.

It is found in the cytoplasm. In terms of biological role, required for rescue of stalled ribosomes mediated by trans-translation. Binds to transfer-messenger RNA (tmRNA), required for stable association of tmRNA with ribosomes. tmRNA and SmpB together mimic tRNA shape, replacing the anticodon stem-loop with SmpB. tmRNA is encoded by the ssrA gene; the 2 termini fold to resemble tRNA(Ala) and it encodes a 'tag peptide', a short internal open reading frame. During trans-translation Ala-aminoacylated tmRNA acts like a tRNA, entering the A-site of stalled ribosomes, displacing the stalled mRNA. The ribosome then switches to translate the ORF on the tmRNA; the nascent peptide is terminated with the 'tag peptide' encoded by the tmRNA and targeted for degradation. The ribosome is freed to recommence translation, which seems to be the essential function of trans-translation. In Aliivibrio salmonicida (strain LFI1238) (Vibrio salmonicida (strain LFI1238)), this protein is SsrA-binding protein.